A 325-amino-acid polypeptide reads, in one-letter code: Glutaminase (325 aa).

Positions 76, 125, 169, 176, 200, 252, and 270 each coordinate substrate.

The protein belongs to the glutaminase family. Homotetramer.

The enzyme catalyses L-glutamine + H2O = L-glutamate + NH4(+). The polypeptide is Glutaminase (Clavibacter michiganensis subsp. michiganensis (strain NCPPB 382)).